A 458-amino-acid polypeptide reads, in one-letter code: Argininosuccinate lyase (458 aa).

Belongs to the lyase 1 family. Argininosuccinate lyase subfamily.

It localises to the cytoplasm. It catalyses the reaction 2-(N(omega)-L-arginino)succinate = fumarate + L-arginine. The protein operates within amino-acid biosynthesis; L-arginine biosynthesis; L-arginine from L-ornithine and carbamoyl phosphate: step 3/3. This is Argininosuccinate lyase from Trichlorobacter lovleyi (strain ATCC BAA-1151 / DSM 17278 / SZ) (Geobacter lovleyi).